We begin with the raw amino-acid sequence, 284 residues long: Tropomyosin alpha-1 chain (284 aa).

Residues 1 to 40 (MDAIKKKMQMLKLDKENALDRAEQAEADKKGAEDKSKQLE) form a disordered region. The stretch at 1 to 284 (MDAIKKKMQM…DHALNDMTSI (284 aa)) forms a coiled coil. Over residues 12-40 (KLDKENALDRAEQAEADKKGAEDKSKQLE) the composition is skewed to basic and acidic residues.

Belongs to the tropomyosin family. As to quaternary structure, homodimer. Heterodimer of an alpha (TPM1, TPM3 or TPM4) and a beta (TPM2) chain.

It localises to the cytoplasm. Its subcellular location is the cytoskeleton. In terms of biological role, binds to actin filaments in muscle and non-muscle cells. Plays a central role, in association with the troponin complex, in the calcium dependent regulation of vertebrate striated muscle contraction. Smooth muscle contraction is regulated by interaction with caldesmon. In non-muscle cells is implicated in stabilizing cytoskeleton actin filaments. This chain is Tropomyosin alpha-1 chain (tpm1), found in Rana temporaria (European common frog).